The following is a 65-amino-acid chain: Large ribosomal subunit protein bL35 (65 aa).

Over residues 1–15 (MPKMKTKKSASKRFT) the composition is skewed to basic residues. Residues 1–27 (MPKMKTKKSASKRFTARPNGSFKRGQA) form a disordered region.

This sequence belongs to the bacterial ribosomal protein bL35 family.

This chain is Large ribosomal subunit protein bL35, found in Cupriavidus pinatubonensis (strain JMP 134 / LMG 1197) (Cupriavidus necator (strain JMP 134)).